Consider the following 238-residue polypeptide: Ubiquinone biosynthesis O-methyltransferase (238 aa).

Positions 38, 58, 79, and 124 each coordinate S-adenosyl-L-methionine.

It belongs to the methyltransferase superfamily. UbiG/COQ3 family.

The catalysed reaction is a 3-demethylubiquinol + S-adenosyl-L-methionine = a ubiquinol + S-adenosyl-L-homocysteine + H(+). The enzyme catalyses a 3-(all-trans-polyprenyl)benzene-1,2-diol + S-adenosyl-L-methionine = a 2-methoxy-6-(all-trans-polyprenyl)phenol + S-adenosyl-L-homocysteine + H(+). The protein operates within cofactor biosynthesis; ubiquinone biosynthesis. Functionally, O-methyltransferase that catalyzes the 2 O-methylation steps in the ubiquinone biosynthetic pathway. The sequence is that of Ubiquinone biosynthesis O-methyltransferase from Acinetobacter baylyi (strain ATCC 33305 / BD413 / ADP1).